Here is a 506-residue protein sequence, read N- to C-terminus: Pleckstrin homology domain-containing family D member 1 (506 aa).

Residues 28–136 form the PH domain; sequence KVQLYGVLWK…WLEMLQESGK (109 aa). A coiled-coil region spans residues 146 to 391; that stretch reads EAMIKSLEAQ…KVRNKEKEER (246 aa). Arginine 503 bears the Omega-N-methylarginine mark.

Belongs to the PLEKHD1 family.

The chain is Pleckstrin homology domain-containing family D member 1 (PLEKHD1) from Homo sapiens (Human).